The chain runs to 256 residues: Small ribosomal subunit protein eS1 (256 aa).

The segment covering Met-1–Lys-18 has biased composition (basic residues). Residues Met-1–Thr-20 are disordered. Ala-2 is modified (N-acetylalanine; partial).

It belongs to the eukaryotic ribosomal protein eS1 family. In terms of assembly, component of the small ribosomal subunit. Mature ribosomes consist of a small (40S) and a large (60S) subunit. The 40S subunit contains about 33 different proteins and 1 molecule of RNA (18S). The 60S subunit contains about 49 different proteins and 3 molecules of RNA (25S, 5.8S and 5S).

Its subcellular location is the cytoplasm. The polypeptide is Small ribosomal subunit protein eS1 (rps1) (Aspergillus clavatus (strain ATCC 1007 / CBS 513.65 / DSM 816 / NCTC 3887 / NRRL 1 / QM 1276 / 107)).